A 346-amino-acid chain; its full sequence is Retinal homeobox protein Rx (346 aa).

Residues 33–40 carry the Octapeptide motif motif; it reads HSIEAILG. Disordered regions lie at residues 46–145 and 194–318; these read GILG…TFTT and QEKL…LDEA. A compositionally biased stretch (basic and acidic residues) spans 55–67; it reads RGARGAKERDRRL. Over residues 83-92 the composition is skewed to pro residues; sequence PSPPPAPAPA. The homeobox DNA-binding region spans 136–195; sequence HRRNRTTFTTYQLHELERAFEKSHYPDVYSREELAGKVNLPEVRVQVWFQNRRAKWRRQE. Low complexity predominate over residues 207–225; sequence SPLLSFSRSPPSATLSPLG. Positions 226 to 236 are enriched in gly residues; that stretch reads AGPGSGGGPAG. Residues 237 to 246 show a composition bias toward low complexity; it reads GALPLESWLG. Over residues 274 to 304 the composition is skewed to pro residues; that stretch reads YTPPPPPPPFLNSPPLGPGLQPLAPPPPSYP. The short motif at 323 to 336 is the OAR element; sequence SSIAALRLKAKEHI. Positions 329-333 match the Nuclear localization signal motif; that stretch reads RLKAK.

The protein belongs to the paired homeobox family. Bicoid subfamily. As to expression, expressed in the developing eye and weakly expressed in the adult retina.

It localises to the nucleus. Plays a critical role in eye formation by regulating the initial specification of retinal cells and/or their subsequent proliferation. Binds to the photoreceptor conserved element-I (PCE-1/Ret 1) in the photoreceptor cell-specific arrestin promoter. The sequence is that of Retinal homeobox protein Rx (RAX) from Homo sapiens (Human).